The primary structure comprises 360 residues: Probable butyrate kinase (360 aa).

This sequence belongs to the acetokinase family.

It localises to the cytoplasm. It carries out the reaction butanoate + ATP = butanoyl phosphate + ADP. The protein is Probable butyrate kinase of Enterococcus faecalis (strain ATCC 700802 / V583).